Consider the following 344-residue polypeptide: uncharacterized protein (344 aa).

Residues 1–98 (MIDFVKSRDT…NNDEIGIWNY (98 aa)) are Cytoplasmic-facing. Residues 99–119 (ISVAEMGGVLLFLSYWIWTCL) form a helical membrane-spanning segment. His-120 is a topological domain (lumenal). Residues 121 to 141 (FSKIIFPAQKVICLYIFLFAL) form a helical membrane-spanning segment. The Cytoplasmic segment spans residues 142-198 (NQTLQECIEEYVFSSECIKYRQFYSVYEIIDFLRTNFYRLFVIYCALGFGITRTVPK). Residues 199–219 (YLMIKGISIVIALCSVYWISL) form a helical membrane-spanning segment. Topologically, residues 220-222 (YKD) are lumenal. A helical membrane pass occupies residues 223–243 (VYVVSEIFDMIQYEVSPAIWV). The Cytoplasmic portion of the chain corresponds to 244–273 (YSICHLLKQCTSVTTYENASKARFFRRMLN). Residues 274–294 (AFIFIFCASPMLHYLSNIIFG) form a helical membrane-spanning segment. Residues 295 to 344 (NFDYRLSVIIGDLFTFMEKIAFPCYIMFPTHNEALAYNRNVAEEAQEKMI) lie on the Lumenal side of the membrane.

The protein belongs to the UPF0742 family.

It localises to the endoplasmic reticulum. It is found in the membrane. This is an uncharacterized protein from Schizosaccharomyces pombe (strain 972 / ATCC 24843) (Fission yeast).